The sequence spans 284 residues: uncharacterized protein (284 aa).

A signal peptide spans 1–24 (MLYSRESRTTVLFLALVTSLTVLC). Topologically, residues 25–84 (HSVDVTTVFTTSTITEITTVTAAPQPQNKAETALNTATNIIQTMQFLFNCAPFKWKGPLK) are cytoplasmic. Residues 85 to 104 (ITSCALNFIVLLLTAWGYLL) form a helical membrane-spanning segment. Residues 105–284 (KYLQENKLNS…SVHMYSSSLL (180 aa)) are Extracellular-facing. Asn270 is a glycosylation site (N-linked (GlcNAc...) asparagine).

The protein to yeast YNL033w.

It localises to the cell membrane. This is an uncharacterized protein from Saccharomyces cerevisiae (strain ATCC 204508 / S288c) (Baker's yeast).